The following is a 359-amino-acid chain: Guanine nucleotide-binding protein-like alpha-11 subunit (359 aa).

Gly-2 is lipidated: N-myristoyl glycine. Positions 29–359 constitute a G-alpha domain; that stretch reads KLIKILMMGN…YVKKILEDTI (331 aa). The interval 32 to 45 is G1 motif; the sequence is KILMMGNENSAKST. Ser-44 serves as a coordination point for Mg(2+). Residues 176-185 are G2 motif; the sequence is DIIRCSKNNQ. GTP contacts are provided by residues 178–185, 204–208, and 281–284; these read IRCSKNNQ, DTGNQ, and NKKE. The interval 200–209 is G3 motif; that stretch reads FVFVDTGNQK. A G4 motif region spans residues 277-284; sequence IVLFNKKE. The G5 motif stretch occupies residues 337-342; sequence FNSSDT.

Belongs to the G-alpha family.

The protein is Guanine nucleotide-binding protein-like alpha-11 subunit (gpaK) of Dictyostelium discoideum (Social amoeba).